A 398-amino-acid chain; its full sequence is Arginine biosynthesis bifunctional protein ArgJ (398 aa).

Substrate-binding residues include threonine 148, lysine 174, threonine 185, glutamate 271, asparagine 393, and threonine 398. Catalysis depends on threonine 185, which acts as the Nucleophile.

This sequence belongs to the ArgJ family. As to quaternary structure, heterotetramer of two alpha and two beta chains.

It localises to the cytoplasm. The catalysed reaction is N(2)-acetyl-L-ornithine + L-glutamate = N-acetyl-L-glutamate + L-ornithine. It carries out the reaction L-glutamate + acetyl-CoA = N-acetyl-L-glutamate + CoA + H(+). Its pathway is amino-acid biosynthesis; L-arginine biosynthesis; L-ornithine and N-acetyl-L-glutamate from L-glutamate and N(2)-acetyl-L-ornithine (cyclic): step 1/1. It participates in amino-acid biosynthesis; L-arginine biosynthesis; N(2)-acetyl-L-ornithine from L-glutamate: step 1/4. In terms of biological role, catalyzes two activities which are involved in the cyclic version of arginine biosynthesis: the synthesis of N-acetylglutamate from glutamate and acetyl-CoA as the acetyl donor, and of ornithine by transacetylation between N(2)-acetylornithine and glutamate. In Listeria monocytogenes serotype 4b (strain F2365), this protein is Arginine biosynthesis bifunctional protein ArgJ.